We begin with the raw amino-acid sequence, 146 residues long: Large ribosomal subunit protein uL15 (146 aa).

A disordered region spans residues Met-1–Pro-46. Low complexity predominate over residues Gly-29–Lys-43.

It belongs to the universal ribosomal protein uL15 family. In terms of assembly, part of the 50S ribosomal subunit.

Its function is as follows. Binds to the 23S rRNA. The sequence is that of Large ribosomal subunit protein uL15 from Cutibacterium acnes (strain DSM 16379 / KPA171202) (Propionibacterium acnes).